The following is a 121-amino-acid chain: Large ribosomal subunit protein bL12 (121 aa).

This sequence belongs to the bacterial ribosomal protein bL12 family. As to quaternary structure, homodimer. Part of the ribosomal stalk of the 50S ribosomal subunit. Forms a multimeric L10(L12)X complex, where L10 forms an elongated spine to which 2 to 4 L12 dimers bind in a sequential fashion. Binds GTP-bound translation factors.

Its function is as follows. Forms part of the ribosomal stalk which helps the ribosome interact with GTP-bound translation factors. Is thus essential for accurate translation. The polypeptide is Large ribosomal subunit protein bL12 (Pseudomonas putida (strain GB-1)).